The sequence spans 312 residues: Protein ABIL2 (312 aa).

Residues 173–287 form a disordered region; sequence TIRETPPPPV…TEQQQPSKSK (115 aa). Low complexity predominate over residues 183–199; that stretch reads RKSTSQSSSPRQPPQRS. Residues 230 to 251 are compositionally biased toward polar residues; the sequence is SVATRKSASISRPTTPSKSRSI. Positions 269-279 are enriched in basic and acidic residues; it reads AFEKDNQKETE.

It belongs to the ABI family. Binds SCAR.

It localises to the cytoplasm. It is found in the cytoskeleton. Involved in regulation of actin and microtubule organization. Part of a WAVE complex that activates the Arp2/3 complex. This Arabidopsis thaliana (Mouse-ear cress) protein is Protein ABIL2 (ABIL2).